Reading from the N-terminus, the 1028-residue chain is GPI inositol-deacylase (1028 aa).

The chain crosses the membrane as a helical span at residues Val51–Leu71. Asn166 carries an N-linked (GlcNAc...) asparagine glycan. The active site involves Ser231. Residues Asn299, Asn530, Asn586, and Asn679 are each glycosylated (N-linked (GlcNAc...) asparagine). Helical transmembrane passes span Leu699–Leu719, Phe740–Ile760, Trp799–Ile819, Ile867–Leu887, Ser915–Leu935, Ser948–Leu968, Ile979–Gly999, and Asn1002–Leu1022.

It belongs to the GPI inositol-deacylase family.

Its subcellular location is the endoplasmic reticulum membrane. In terms of biological role, involved in inositol deacylation of GPI-anchored proteins which plays important roles in the quality control and ER-associated degradation of GPI-anchored proteins. This Eremothecium gossypii (strain ATCC 10895 / CBS 109.51 / FGSC 9923 / NRRL Y-1056) (Yeast) protein is GPI inositol-deacylase (BST1).